A 426-amino-acid chain; its full sequence is tRNA(Ile)-lysidine synthase (426 aa).

19–24 (SGGLDS) is an ATP binding site.

This sequence belongs to the tRNA(Ile)-lysidine synthase family.

Its subcellular location is the cytoplasm. The catalysed reaction is cytidine(34) in tRNA(Ile2) + L-lysine + ATP = lysidine(34) in tRNA(Ile2) + AMP + diphosphate + H(+). Ligates lysine onto the cytidine present at position 34 of the AUA codon-specific tRNA(Ile) that contains the anticodon CAU, in an ATP-dependent manner. Cytidine is converted to lysidine, thus changing the amino acid specificity of the tRNA from methionine to isoleucine. The sequence is that of tRNA(Ile)-lysidine synthase from Neisseria meningitidis serogroup A / serotype 4A (strain DSM 15465 / Z2491).